A 404-amino-acid chain; its full sequence is CD2 homolog (404 aa).

An N-terminal signal peptide occupies residues 1-16; it reads MFITLIFLSYINIVLS. The Extracellular portion of the chain corresponds to 17 to 225; sequence NNYWARLNET…QNYFLENIHT (209 aa). Asparagine 24, asparagine 87, asparagine 92, asparagine 96, asparagine 122, asparagine 139, asparagine 167, asparagine 193, asparagine 200, and asparagine 206 each carry an N-linked (GlcNAc...) asparagine; by host glycan. 2 disulfide bridges follow: cysteine 140/cysteine 207 and cysteine 147/cysteine 190. The helical transmembrane segment at 226 to 246 threads the bilayer; the sequence is LFYIIIFIVSGLIASIFISII. Over 247-404 the chain is Cytoplasmic; that stretch reads TFLSLRKRKK…ISLIHVDRII (158 aa). A disordered region spans residues 260–295; sequence EIESPPPESNEEEQCQHDDTTSIHEPSPREPLLPKP. Over residues 273 to 287 the composition is skewed to basic and acidic residues; sequence QCQHDDTTSIHEPSP. 7 repeat units span residues 322–327, 328–333, 334–339, 340–345, 346–351, 352–357, and 358–363. Positions 322 to 363 are 7 X 6 AA tandem repeats of [KN]-P-C-P-P-P; that stretch reads NPCPPPKPCPPPKPCPPPKPCPPPKPCPPPKPCPPPKPCPPP. A compositionally biased stretch (pro residues) spans 357 to 388; sequence PKPCPPPKPCSSPESYSPPKPLPSIPLLPNIP. The segment at 357 to 390 is disordered; sequence PKPCPPPKPCSSPESYSPPKPLPSIPLLPNIPPL.

Belongs to the asfivirus CD2 homolog protein family. As to quaternary structure, both glycosylated and nonglycosylated forms interact (via C-terminus) with the host AP-1 complex. Cleaved into two fragments of 63 kDa and 26 kDa containing respectively the glycosylated N-terminus and the nonglycosylated C-terminus. A full-length 89-kDa glycosylated form also exists.

It localises to the host membrane. The protein resides in the virion membrane. The protein localises to the host Golgi apparatus. May play an immunosuppressive role by inhibiting lymphocyte proliferation and subsequently facilitating viral replication and generalization of infection. Responsible for viral hemadsorption, which may help viral spread. Increases virus replication in the tick vector at the step of virus uptake or replication in the tick gut. May play a role in the host Golgi reorganization to yield viral factories. May play a role in host cell penetration. The sequence is that of CD2 homolog from African swine fever virus (isolate Tick/South Africa/Pretoriuskop Pr4/1996) (ASFV).